The sequence spans 302 residues: Sulfate adenylyltransferase subunit 2 (302 aa).

The protein belongs to the PAPS reductase family. CysD subfamily. As to quaternary structure, heterodimer composed of CysD, the smaller subunit, and CysN.

It catalyses the reaction sulfate + ATP + H(+) = adenosine 5'-phosphosulfate + diphosphate. Its pathway is sulfur metabolism; hydrogen sulfide biosynthesis; sulfite from sulfate: step 1/3. Its function is as follows. With CysN forms the ATP sulfurylase (ATPS) that catalyzes the adenylation of sulfate producing adenosine 5'-phosphosulfate (APS) and diphosphate, the first enzymatic step in sulfur assimilation pathway. APS synthesis involves the formation of a high-energy phosphoric-sulfuric acid anhydride bond driven by GTP hydrolysis by CysN coupled to ATP hydrolysis by CysD. This chain is Sulfate adenylyltransferase subunit 2, found in Escherichia coli O9:H4 (strain HS).